The sequence spans 354 residues: Chorismate synthase (354 aa).

2 residues coordinate NADP(+): arginine 48 and arginine 54. FMN-binding positions include 125–127, 238–239, glycine 278, 293–297, and arginine 319; these read RSS, NA, and KPTSS.

The protein belongs to the chorismate synthase family. In terms of assembly, homotetramer. The cofactor is FMNH2.

The enzyme catalyses 5-O-(1-carboxyvinyl)-3-phosphoshikimate = chorismate + phosphate. It participates in metabolic intermediate biosynthesis; chorismate biosynthesis; chorismate from D-erythrose 4-phosphate and phosphoenolpyruvate: step 7/7. Catalyzes the anti-1,4-elimination of the C-3 phosphate and the C-6 proR hydrogen from 5-enolpyruvylshikimate-3-phosphate (EPSP) to yield chorismate, which is the branch point compound that serves as the starting substrate for the three terminal pathways of aromatic amino acid biosynthesis. This reaction introduces a second double bond into the aromatic ring system. This Blochmanniella pennsylvanica (strain BPEN) protein is Chorismate synthase.